A 393-amino-acid chain; its full sequence is NAD(P)H-quinone oxidoreductase subunit H, chloroplastic (393 aa).

Belongs to the complex I 49 kDa subunit family. In terms of assembly, NDH is composed of at least 16 different subunits, 5 of which are encoded in the nucleus.

It localises to the plastid. The protein localises to the chloroplast thylakoid membrane. It catalyses the reaction a plastoquinone + NADH + (n+1) H(+)(in) = a plastoquinol + NAD(+) + n H(+)(out). It carries out the reaction a plastoquinone + NADPH + (n+1) H(+)(in) = a plastoquinol + NADP(+) + n H(+)(out). In terms of biological role, NDH shuttles electrons from NAD(P)H:plastoquinone, via FMN and iron-sulfur (Fe-S) centers, to quinones in the photosynthetic chain and possibly in a chloroplast respiratory chain. The immediate electron acceptor for the enzyme in this species is believed to be plastoquinone. Couples the redox reaction to proton translocation, and thus conserves the redox energy in a proton gradient. This Lactuca sativa (Garden lettuce) protein is NAD(P)H-quinone oxidoreductase subunit H, chloroplastic.